Here is a 121-residue protein sequence, read N- to C-terminus: Large ribosomal subunit protein bL12 (121 aa).

The protein belongs to the bacterial ribosomal protein bL12 family. In terms of assembly, homodimer. Part of the ribosomal stalk of the 50S ribosomal subunit. Forms a multimeric L10(L12)X complex, where L10 forms an elongated spine to which 2 to 4 L12 dimers bind in a sequential fashion. Binds GTP-bound translation factors.

Its function is as follows. Forms part of the ribosomal stalk which helps the ribosome interact with GTP-bound translation factors. Is thus essential for accurate translation. The chain is Large ribosomal subunit protein bL12 from Shewanella pealeana (strain ATCC 700345 / ANG-SQ1).